The sequence spans 281 residues: MKIFTNQEMKNYSNMRVGGKAKKLIILEPKEEIIDVYNDKENTDIFILGNGTNILFTDEYMDKIFVCTKKLNKIEDLGKNLVKVETGANLKDLTDFMKDKNYTGIESLFGIPGSIGGLVYMNGGAFGTEIFDKIVSIEVFDENHQIREIKKEDLKVAYRKTEIQDKNWLVLSATFKFDNGFDAARVKEIKELRESKHPLDKPSLGSTFKNPEGDFAARLISECGLKGTIIGNAQIAEKHPNFVLNLGNATFKDIIDILTLVKKSVLEKFGIKLEEEIIIVR.

An FAD-binding PCMH-type domain is found at 17–180 (VGGKAKKLII…LSATFKFDNG (164 aa)). The active site involves arginine 159. Serine 206 acts as the Proton donor in catalysis. Residue glutamate 276 is part of the active site.

The protein belongs to the MurB family. The cofactor is FAD.

The protein resides in the cytoplasm. It carries out the reaction UDP-N-acetyl-alpha-D-muramate + NADP(+) = UDP-N-acetyl-3-O-(1-carboxyvinyl)-alpha-D-glucosamine + NADPH + H(+). It participates in cell wall biogenesis; peptidoglycan biosynthesis. In terms of biological role, cell wall formation. This Fusobacterium nucleatum subsp. nucleatum (strain ATCC 25586 / DSM 15643 / BCRC 10681 / CIP 101130 / JCM 8532 / KCTC 2640 / LMG 13131 / VPI 4355) protein is UDP-N-acetylenolpyruvoylglucosamine reductase.